Here is a 302-residue protein sequence, read N- to C-terminus: Large ribosomal subunit protein uL18 (302 aa).

The protein belongs to the universal ribosomal protein uL18 family. In terms of assembly, component of the large ribosomal subunit (LSU).

The protein resides in the cytoplasm. It localises to the nucleus. Component of the ribosome, a large ribonucleoprotein complex responsible for the synthesis of proteins in the cell. The small ribosomal subunit (SSU) binds messenger RNAs (mRNAs) and translates the encoded message by selecting cognate aminoacyl-transfer RNA (tRNA) molecules. The large subunit (LSU) contains the ribosomal catalytic site termed the peptidyl transferase center (PTC), which catalyzes the formation of peptide bonds, thereby polymerizing the amino acids delivered by tRNAs into a polypeptide chain. The nascent polypeptides leave the ribosome through a tunnel in the LSU and interact with protein factors that function in enzymatic processing, targeting, and the membrane insertion of nascent chains at the exit of the ribosomal tunnel. This chain is Large ribosomal subunit protein uL18 (RPL5), found in Cucumis sativus (Cucumber).